A 153-amino-acid polypeptide reads, in one-letter code: Large ribosomal subunit protein uL15 (153 aa).

Positions 1–47 (MRLHELSPAPGSRKDRKRVGRGDAGRGNYSGRGMKGQKARSGGATRP) are disordered.

Belongs to the universal ribosomal protein uL15 family. Part of the 50S ribosomal subunit.

Its function is as follows. Binds to the 23S rRNA. This chain is Large ribosomal subunit protein uL15, found in Dehalococcoides mccartyi (strain ATCC BAA-2100 / JCM 16839 / KCTC 5957 / BAV1).